The chain runs to 170 residues: Peptide deformylase (170 aa).

Fe cation-binding residues include Cys-94 and His-136. The active site involves Glu-137. His-140 contributes to the Fe cation binding site.

This sequence belongs to the polypeptide deformylase family. Fe(2+) serves as cofactor.

It catalyses the reaction N-terminal N-formyl-L-methionyl-[peptide] + H2O = N-terminal L-methionyl-[peptide] + formate. In terms of biological role, removes the formyl group from the N-terminal Met of newly synthesized proteins. Requires at least a dipeptide for an efficient rate of reaction. N-terminal L-methionine is a prerequisite for activity but the enzyme has broad specificity at other positions. The polypeptide is Peptide deformylase (Stenotrophomonas maltophilia (strain R551-3)).